We begin with the raw amino-acid sequence, 518 residues long: 12S seed storage globulin 1 (518 aa).

Positions 1 to 24 (MATTRFPSLLFYSCIFLLCNGSMA) are cleaved as a signal peptide. 2 cysteine pairs are disulfide-bonded: Cys45–Cys78 and Cys121–Cys324. Residues 50-240 (LQAFEPLRQV…ALGISQQAAQ (191 aa)) form the Cupin type-1 1 domain. A compositionally biased stretch (low complexity) spans 281–295 (QSQQEQSTQYQVGQS). Residues 281–311 (QSQQEQSTQYQVGQSPQYQEGQSTQYQSGQS) are disordered. A compositionally biased stretch (polar residues) spans 296 to 311 (PQYQEGQSTQYQSGQS). Residues 330–479 (QNIENPKRAD…AYRISRQESQ (150 aa)) form the Cupin type-1 2 domain. Residues 496–518 (FAQTGSQSYQDEGESSSTEKASE) form a disordered region.

Belongs to the 11S seed storage protein (globulins) family. Hexamer; each subunit is composed of an acidic and a basic chain derived from a single precursor and linked by a disulfide bond.

This is a seed storage protein. This Avena sativa (Oat) protein is 12S seed storage globulin 1.